Consider the following 430-residue polypeptide: Histidine--tRNA ligase (430 aa).

This sequence belongs to the class-II aminoacyl-tRNA synthetase family. As to quaternary structure, homodimer.

The protein localises to the cytoplasm. It catalyses the reaction tRNA(His) + L-histidine + ATP = L-histidyl-tRNA(His) + AMP + diphosphate + H(+). This is Histidine--tRNA ligase from Lactococcus lactis subsp. cremoris (strain MG1363).